Reading from the N-terminus, the 30-residue chain is Thrombin-like enzyme LmrSP-2 (30 aa).

Belongs to the peptidase S1 family. Snake venom subfamily. Expressed by the venom gland.

Its subcellular location is the secreted. In terms of biological role, thrombin-like snake venom serine protease that cleaves alpha-chain of fibrinogen (FGA) releases only fibrinopeptide A. Shows coagulant, esterase and amidase activities. In Lachesis muta rhombeata (Bushmaster), this protein is Thrombin-like enzyme LmrSP-2.